The following is a 264-amino-acid chain: Phosphonoacetaldehyde hydrolase (264 aa).

Asp-9 acts as the Nucleophile in catalysis. Asp-9 and Ala-11 together coordinate Mg(2+). The active-site Schiff-base intermediate with substrate is the Lys-50. A Mg(2+)-binding site is contributed by Asp-183.

Belongs to the HAD-like hydrolase superfamily. PhnX family. As to quaternary structure, homodimer. Requires Mg(2+) as cofactor.

It carries out the reaction phosphonoacetaldehyde + H2O = acetaldehyde + phosphate + H(+). In terms of biological role, involved in phosphonate degradation. This is Phosphonoacetaldehyde hydrolase from Bacillus cereus (strain AH820).